Here is a 125-residue protein sequence, read N- to C-terminus: UPF0102 protein PA4424 (125 aa).

It belongs to the UPF0102 family.

The chain is UPF0102 protein PA4424 from Pseudomonas aeruginosa (strain ATCC 15692 / DSM 22644 / CIP 104116 / JCM 14847 / LMG 12228 / 1C / PRS 101 / PAO1).